Here is a 376-residue protein sequence, read N- to C-terminus: Respiration factor 1 (376 aa).

4 disordered regions span residues 1–23 (MKDLNPEMGKFATTKGPPQDNRG), 88–107 (VNVTHDESLPLGTIESNSTK), 258–279 (FKEKKKKKKGDVNGNHPETGSS), and 347–376 (GVNELEHNSSNLNNSNSGTPHNHNQNQHTN). Positions 354–376 (NSSNLNNSNSGTPHNHNQNQHTN) are enriched in low complexity.

It localises to the cytoplasm. It is found in the nucleus. The protein resides in the mitochondrion. Functionally, mitochondrial and nuclear transcriptional activator required for respiratory growth. The protein is Respiration factor 1 (RSF1) of Saccharomyces cerevisiae (strain YJM789) (Baker's yeast).